Here is a 118-residue protein sequence, read N- to C-terminus: MASGMGVDENCVARFNELKIRKTVKWIVFKIENTKIVVEKDGKGNADEFRGALPANDCRFAVYNCGNKIQFVLWCPDNAPVKPRMTYASSKDALLKKLDGATAVALEAHEMGDLAPLA.

In terms of domain architecture, ADF-H spans 4–118 (GMGVDENCVA…HEMGDLAPLA (115 aa)).

The protein belongs to the actin-binding proteins ADF family. In terms of assembly, interacts with ACT1 (G-actin); the interaction results in inhibition of actin polymerization. Interacts with DPA; the interaction enhances ADF activity in disassembly of filamentous actin and inhibition of actin polymerization.

Its subcellular location is the cytoplasm. Inhibits actin polymerization. Promotes actin depolymerization. Strongly sequesters actin monomers (G-actin). Weakly severs actin filaments (F-actin). The chain is Actin depolymerizing factor ADF from Toxoplasma gondii.